Reading from the N-terminus, the 410-residue chain is Thyroid hormone receptor alpha (410 aa).

A disordered region spans residues 1–32 (MEQKPSKVECGSDPEESSTRSPDGKRKRKNGQ). The interval 1–52 (MEQKPSKVECGSDPEESSTRSPDGKRKRKNGQCSLKTSMSGYIPSYLDKDEQ) is modulating. Zn(2+)-binding residues include cysteine 53, cysteine 56, cysteine 70, cysteine 73, cysteine 91, cysteine 97, cysteine 107, and cysteine 110. NR C4-type zinc fingers lie at residues 53–73 (CVVC…CEGC) and 91–115 (CKYD…FKKC). The segment at residues 53–127 (CVVCGDKATG…VGMAMDLVLD (75 aa)) is a DNA-binding region (nuclear receptor). Residues 163–407 (EEWDLIHVAT…PPLFLEVFED (245 aa)) form the NR LBD domain. Positions 228 and 277 each coordinate 3,3',5-triiodo-L-thyronine.

The protein belongs to the nuclear hormone receptor family. NR1 subfamily. As to quaternary structure, binds DNA as a dimer; homodimer and heterodimer with RXRB. Interacts with NCOA3 and NCOA6 coactivators, leading to a strong increase of transcription of target genes. Probably interacts with SFPQ. Interacts with C1D. Interacts with AKAP13. Interacts with TP53INP2. Interacts with PER2. Interacts with TACC1. The interaction with isoform alpha-1, but not alpha-2, is decreased in the presence of thyroid hormone T3.

The protein localises to the nucleus. It is found in the cytoplasm. In terms of biological role, nuclear hormone receptor that can act as a repressor or activator of transcription. High affinity receptor for thyroid hormones, including triiodothyronine and thyroxine. The chain is Thyroid hormone receptor alpha (THRA) from Ovis aries (Sheep).